Consider the following 130-residue polypeptide: Small ribosomal subunit protein uS8 (130 aa).

The protein belongs to the universal ribosomal protein uS8 family. As to quaternary structure, part of the 30S ribosomal subunit. Contacts proteins S5 and S12.

Functionally, one of the primary rRNA binding proteins, it binds directly to 16S rRNA central domain where it helps coordinate assembly of the platform of the 30S subunit. The chain is Small ribosomal subunit protein uS8 from Proteus mirabilis (strain HI4320).